A 330-amino-acid chain; its full sequence is tRNA-modifying protein YgfZ (330 aa).

Folate-binding residues include tryptophan 28 and tryptophan 190.

It belongs to the tRNA-modifying YgfZ family.

Its subcellular location is the cytoplasm. Folate-binding protein involved in regulating the level of ATP-DnaA and in the modification of some tRNAs. It is probably a key factor in regulatory networks that act via tRNA modification, such as initiation of chromosomal replication. The polypeptide is tRNA-modifying protein YgfZ (Yersinia enterocolitica serotype O:8 / biotype 1B (strain NCTC 13174 / 8081)).